Consider the following 684-residue polypeptide: Probable Xaa-Pro aminopeptidase P (684 aa).

4 residues coordinate Mn(2+): D481, D492, E590, and E604.

Belongs to the peptidase M24B family. Mn(2+) serves as cofactor.

The catalysed reaction is Release of any N-terminal amino acid, including proline, that is linked to proline, even from a dipeptide or tripeptide.. Functionally, catalyzes the removal of a penultimate prolyl residue from the N-termini of peptides. In Neurospora crassa (strain ATCC 24698 / 74-OR23-1A / CBS 708.71 / DSM 1257 / FGSC 987), this protein is Probable Xaa-Pro aminopeptidase P (ampp).